Consider the following 224-residue polypeptide: UPF0758 protein Pmen_4376 (224 aa).

The region spanning Ala-102–Met-224 is the MPN domain. Residues His-173, His-175, and Asp-186 each contribute to the Zn(2+) site. A JAMM motif motif is present at residues His-173–Asp-186.

It belongs to the UPF0758 family.

The polypeptide is UPF0758 protein Pmen_4376 (Ectopseudomonas mendocina (strain ymp) (Pseudomonas mendocina)).